The primary structure comprises 533 residues: WUSCHEL-related homeobox 7 (533 aa).

Disordered stretches follow at residues 1–74 and 125–212; these read MASS…NPRP and SKNK…STQA. The segment covering 28-41 has biased composition (low complexity); the sequence is AGSPPSLLSGSSAG. Over residues 59 to 68 the composition is skewed to basic and acidic residues; sequence GEERVPDPKP. The homeobox; WUS-type DNA-binding region spans 65–129; it reads DPKPRWNPRP…NRKSRSKNKL (65 aa). The segment covering 132–143 has biased composition (gly residues); the sequence is GGTGRAGLGLGG. Positions 161–174 are enriched in pro residues; sequence FTPPPPILPAPQPV. The span at 175-202 shows a compositional bias: low complexity; sequence QPQQQLVSPVAAPTSSSSSSSDRSSGSS.

This sequence belongs to the WUS homeobox family.

The protein resides in the nucleus. In terms of biological role, transcription factor which may be involved in developmental processes. This chain is WUSCHEL-related homeobox 7 (WOX7), found in Oryza sativa subsp. japonica (Rice).